Here is a 198-residue protein sequence, read N- to C-terminus: uncharacterized protein (198 aa).

Positions 51 to 74 are disordered; the sequence is EEPDNGDDRGSRRTTGQGRKWAAH.

This is an uncharacterized protein from Homo sapiens (Human).